A 169-amino-acid polypeptide reads, in one-letter code: MTALFAQSLVTPSVGLIFWKTVAFLIFLYILYRFGWGPITESLEEREEEIEHSIQRAEEALEEAKAIQAENEEARREAEQKAQQILREARDSAEELREEEKAKTRREIQEMKEQAQAEIEREKQAALQELRDEVADLAIEAAQKIIENDLDADRHRQLVDDALDDFPTN.

A helical membrane pass occupies residues 12–32 (PSVGLIFWKTVAFLIFLYILY). The segment at 69–107 (AENEEARREAEQKAQQILREARDSAEELREEEKAKTRRE) is disordered. Positions 87–107 (REARDSAEELREEEKAKTRRE) are enriched in basic and acidic residues.

Belongs to the ATPase B chain family. In terms of assembly, F-type ATPases have 2 components, F(1) - the catalytic core - and F(0) - the membrane proton channel. F(1) has five subunits: alpha(3), beta(3), gamma(1), delta(1), epsilon(1). F(0) has three main subunits: a(1), b(2) and c(10-14). The alpha and beta chains form an alternating ring which encloses part of the gamma chain. F(1) is attached to F(0) by a central stalk formed by the gamma and epsilon chains, while a peripheral stalk is formed by the delta and b chains.

It is found in the cell inner membrane. In terms of biological role, f(1)F(0) ATP synthase produces ATP from ADP in the presence of a proton or sodium gradient. F-type ATPases consist of two structural domains, F(1) containing the extramembraneous catalytic core and F(0) containing the membrane proton channel, linked together by a central stalk and a peripheral stalk. During catalysis, ATP synthesis in the catalytic domain of F(1) is coupled via a rotary mechanism of the central stalk subunits to proton translocation. Its function is as follows. Component of the F(0) channel, it forms part of the peripheral stalk, linking F(1) to F(0). This chain is ATP synthase subunit b, found in Salinibacter ruber (strain DSM 13855 / M31).